The chain runs to 259 residues: Phosphatidylglycerol--prolipoprotein diacylglyceryl transferase (259 aa).

Helical transmembrane passes span 9 to 29, 48 to 68, 83 to 103, 114 to 133, 167 to 187, 197 to 217, and 227 to 247; these read LGPL…ILAV, DFIL…YVIF, IWHG…VLFI, DFLD…GRWG, TPTF…IMIL, GEVA…IEGM, and LRVS…LIVI. Position 131 (Arg-131) interacts with a 1,2-diacyl-sn-glycero-3-phospho-(1'-sn-glycerol).

It belongs to the Lgt family.

The protein resides in the cell membrane. It catalyses the reaction L-cysteinyl-[prolipoprotein] + a 1,2-diacyl-sn-glycero-3-phospho-(1'-sn-glycerol) = an S-1,2-diacyl-sn-glyceryl-L-cysteinyl-[prolipoprotein] + sn-glycerol 1-phosphate + H(+). The protein operates within protein modification; lipoprotein biosynthesis (diacylglyceryl transfer). Catalyzes the transfer of the diacylglyceryl group from phosphatidylglycerol to the sulfhydryl group of the N-terminal cysteine of a prolipoprotein, the first step in the formation of mature lipoproteins. This Streptococcus mutans serotype c (strain ATCC 700610 / UA159) protein is Phosphatidylglycerol--prolipoprotein diacylglyceryl transferase.